An 88-amino-acid polypeptide reads, in one-letter code: Apolipoprotein C-I (88 aa).

The signal sequence occupies residues 1 to 26 (MRLFISLPILIVVLAMALEGPAPAQA).

Belongs to the apolipoprotein C1 family.

It localises to the secreted. In terms of biological role, inhibitor of lipoprotein binding to the low density lipoprotein (LDL) receptor, LDL receptor-related protein, and very low density lipoprotein (VLDL) receptor. Associates with high density lipoproteins (HDL) and the triacylglycerol-rich lipoproteins in the plasma and makes up about 10% of the protein of the VLDL and 2% of that of HDL. Appears to interfere directly with fatty acid uptake and is also the major plasma inhibitor of cholesteryl ester transfer protein (CETP). Modulates the interaction of APOE with beta-migrating VLDL and inhibits binding of beta-VLDL to the LDL receptor-related protein. Binds free fatty acids and reduces their intracellular esterification. This chain is Apolipoprotein C-I (Apoc1), found in Neotoma lepida (Desert woodrat).